Consider the following 235-residue polypeptide: Probable transcriptional regulatory protein MPN_478 (235 aa).

Belongs to the TACO1 family.

It is found in the cytoplasm. The polypeptide is Probable transcriptional regulatory protein MPN_478 (Mycoplasma pneumoniae (strain ATCC 29342 / M129 / Subtype 1) (Mycoplasmoides pneumoniae)).